Reading from the N-terminus, the 248-residue chain is Probable transcriptional regulatory protein Dde_2325 (248 aa).

Residues 1-15 (MAGHSKWKNIQHRKG) show a composition bias toward basic residues. Residues 1–22 (MAGHSKWKNIQHRKGRQDAKKS) form a disordered region.

It belongs to the TACO1 family.

The protein resides in the cytoplasm. The chain is Probable transcriptional regulatory protein Dde_2325 from Oleidesulfovibrio alaskensis (strain ATCC BAA-1058 / DSM 17464 / G20) (Desulfovibrio alaskensis).